Consider the following 1273-residue polypeptide: Ras-specific guanine nucleotide-releasing factor 1 (1273 aa).

In terms of domain architecture, PH 1 spans 22–129; sequence DGTRKGYLSK…WVAAIAHASY (108 aa). The 26-residue stretch at 204–229 folds into the IQ domain; the sequence is KKIKKVQSFLRGWLCRRKWKTIIQDY. A DH domain is found at 240 to 426; the sequence is KRNQVVFSML…EELSRIMHDE (187 aa). The PH 2 domain occupies 467–584; the sequence is PMSEKGKITR…WTSDISQCVD (118 aa). Phosphoserine; by PLK2 occurs at positions 577 and 626. Residues 644-761 form the N-terminal Ras-GEF domain; sequence KVLQIRYASV…SRRRKLSLNI (118 aa). The interval 724–754 is disordered; the sequence is YGEPPKSPRATRKFSSPPPLSITKTSSPSRR. Phosphoserine is present on serine 758. A phosphoserine; by PLK2 mark is found at serine 779 and serine 800. Residues 809 to 874 are disordered; sequence TNKIPDEGDT…PKSVKNKNSS (66 aa). Positions 842 to 854 are enriched in acidic residues; it reads SDIDQNQSDDGDT. A compositionally biased stretch (low complexity) spans 855 to 867; the sequence is ETSPTKSPTTPKS. Residues 1038–1270 form the Ras-GEF domain; the sequence is SALEIAEQLT…YESSLRIEPK (233 aa).

Homooligomer and heterooligomer with RASGRF2. Interacts with USP8, thereby regulating its stability. In terms of processing, phosphorylated by PLK2, leading to ubiquitination and degradation by the proteasome. Ubiquitinated and degraded following phosphorylation by PLK2. Post-translationally, phosphorylated by SRC and LCK. Phosphorylation by LCK increases its capacity to stimulate the GDP/GTP exchange on Ras, whereas its phosphorylation by SRC seems not to have an effect on stimulation activity.

Functionally, promotes the exchange of Ras-bound GDP by GTP. This Homo sapiens (Human) protein is Ras-specific guanine nucleotide-releasing factor 1 (RASGRF1).